The primary structure comprises 186 residues: uncharacterized protein (186 aa).

The first 18 residues, 1–18 (MKKFFFAAALVVSGLLVG), serve as a signal peptide directing secretion. Cys19 carries the N-palmitoyl cysteine lipid modification. Cys19 is lipidated: S-diacylglycerol cysteine.

The protein resides in the cell membrane. This is an uncharacterized protein from Salmonella typhimurium (strain LT2 / SGSC1412 / ATCC 700720).